The primary structure comprises 266 residues: Undecaprenyl-diphosphatase (266 aa).

Helical transmembrane passes span 1–21 (MDIFQVIVLALIQGLTEFLPI), 39–59 (QGLTFDVAVNTGSLLAVVIYF), 87–107 (WWIILATIPAVIFGFTAKDFI), 114–134 (IEVIATTTIVFGLLLWWADKL), 144–164 (VGWKKALLIGFAQAMALIPGT), 184–204 (AARFSFLMSVPVSLGAAILVV), 218–238 (ALVLGTALSFVAAYLCIHYFL), and 246–266 (MTPFVIYRLALGAILCVVIFA).

Belongs to the UppP family.

It is found in the cell inner membrane. It carries out the reaction di-trans,octa-cis-undecaprenyl diphosphate + H2O = di-trans,octa-cis-undecaprenyl phosphate + phosphate + H(+). Functionally, catalyzes the dephosphorylation of undecaprenyl diphosphate (UPP). Confers resistance to bacitracin. In Shewanella loihica (strain ATCC BAA-1088 / PV-4), this protein is Undecaprenyl-diphosphatase.